The chain runs to 213 residues: Adenylate kinase (213 aa).

10 to 15 is a binding site for ATP; that stretch reads GAGKGT. Residues 30–59 form an NMP region; that stretch reads AVGDIFRTIIKTSTSEAELINNYVKQGALI. AMP is bound by residues Arg36, 57–59, 85–88, and Gln92; these read ALI and GYPR. The LID stretch occupies residues 123 to 161; it reads GRYSCKNCGKIYNVHFLQPKTDYVCDVCSSNVFDYRRDD. An ATP-binding site is contributed by Arg124. Positions 127 and 130 each coordinate Zn(2+). 133–134 provides a ligand contact to ATP; it reads IY. Residues Cys147 and Cys150 each coordinate Zn(2+). Positions 158 and 169 each coordinate AMP. Residue Lys197 participates in ATP binding.

It belongs to the adenylate kinase family. Monomer.

Its subcellular location is the cytoplasm. It carries out the reaction AMP + ATP = 2 ADP. The protein operates within purine metabolism; AMP biosynthesis via salvage pathway; AMP from ADP: step 1/1. Catalyzes the reversible transfer of the terminal phosphate group between ATP and AMP. Plays an important role in cellular energy homeostasis and in adenine nucleotide metabolism. The chain is Adenylate kinase from Rickettsia typhi (strain ATCC VR-144 / Wilmington).